Reading from the N-terminus, the 243-residue chain is LexA repressor (243 aa).

The segment at 1–30 (MSDDTGEFTDGSTESPADADGAGRRRAVDN) is disordered. Residues 21–30 (GAGRRRAVDN) show a composition bias toward basic and acidic residues. A DNA-binding region (H-T-H motif) is located at residues 56–76 (IREIGDAVGLTSTSSVAHQLR). Active-site for autocatalytic cleavage activity residues include serine 167 and lysine 204.

The protein belongs to the peptidase S24 family. Homodimer.

The catalysed reaction is Hydrolysis of Ala-|-Gly bond in repressor LexA.. In terms of biological role, represses a number of genes involved in the response to DNA damage (SOS response), including recA and lexA. In the presence of single-stranded DNA, RecA interacts with LexA causing an autocatalytic cleavage which disrupts the DNA-binding part of LexA, leading to derepression of the SOS regulon and eventually DNA repair. The protein is LexA repressor of Mycolicibacterium smegmatis (strain ATCC 700084 / mc(2)155) (Mycobacterium smegmatis).